The chain runs to 1123 residues: Adenylyl cyclase X E (1123 aa).

The Cytoplasmic portion of the chain corresponds to M1–Y47. Residues L48–A68 traverse the membrane as a helical segment. At T69–R73 the chain is on the extracellular side. A helical membrane pass occupies residues S74–L94. The Cytoplasmic segment spans residues S95–H106. Residues T107–T127 form a helical membrane-spanning segment. Over E128–S137 the chain is Extracellular. The chain crosses the membrane as a helical span at residues W138 to I158. Over H159–G163 the chain is Cytoplasmic. Residues A164–A184 traverse the membrane as a helical segment. Residues Q185–S196 are Extracellular-facing. Residues V197 to Y217 form a helical membrane-spanning segment. The Cytoplasmic segment spans residues R218–K581. ATP-binding positions include L346–D348 and R392. Mg(2+) is bound at residue D348. The helical transmembrane segment at Y582–T602 threads the bilayer. Topologically, residues Q603 to S608 are extracellular. A helical membrane pass occupies residues C609 to Y629. Over K630–R667 the chain is Cytoplasmic. Residues I668–S688 form a helical membrane-spanning segment. Topologically, residues C689–T719 are extracellular. A helical transmembrane segment spans residues T720–V740. The Cytoplasmic portion of the chain corresponds to K741–A743. A helical membrane pass occupies residues V744–F764. Residues H765–P772 are Extracellular-facing. The helical transmembrane segment at Y773–V793 threads the bilayer. Residues K794–L1123 lie on the Cytoplasmic side of the membrane. ATP-binding positions include K903, D1014–W1016, N1021–R1025, and K1061.

Belongs to the adenylyl cyclase class-4/guanylyl cyclase family. Expressed in labella.

It is found in the membrane. The enzyme catalyses ATP = 3',5'-cyclic AMP + diphosphate. Catalyzes the formation of the signaling molecule cAMP in response to G-protein signaling. The polypeptide is Adenylyl cyclase X E (Drosophila melanogaster (Fruit fly)).